A 250-amino-acid polypeptide reads, in one-letter code: Green-light absorbing proteorhodopsin (250 aa).

The N-terminal stretch at 1-18 (MGKLLLILGSVIALPTFA) is a signal peptide. Residues 19 to 29 (AGGGDLDASDY) lie on the Extracellular side of the membrane. The chain crosses the membrane as a helical span at residues 30 to 53 (TGVSFWLVTAALLASTVFFFVERD). Residues 54 to 58 (RVSAK) lie on the Cytoplasmic side of the membrane. The chain crosses the membrane as a helical span at residues 59 to 87 (WKTSLTVSGLVTGIAFWHYMYMRGVWIET). Residues 88–90 (GDS) are Extracellular-facing. The helical transmembrane segment at 91 to 118 (PTVFRYIDWLLTVPLLICEFYLILAAAT) threads the bilayer. Over 119–121 (NVA) the chain is Cytoplasmic. A helical transmembrane segment spans residues 122 to 144 (GSLFKKLLVGSLVMLVFGYMGEA). Topologically, residues 145 to 147 (GIM) are extracellular. Residues 148–177 (AAWPAFIIGCLAWVYMIYELWAGEGKSACN) traverse the membrane as a helical segment. Residues 178-180 (TAS) lie on the Cytoplasmic side of the membrane. Residues 181 to 208 (PAVQSAYNTMMYIIIFGWAIYPVGYFTG) form a helical membrane-spanning segment. Topologically, residues 209 to 218 (YLMGDGGSAL) are extracellular. The chain crosses the membrane as a helical span at residues 219 to 249 (NLNLIYNLADFVNKILFGLIIWNVAVKESSN). Lys-232 is modified (N6-(retinylidene)lysine). Ala-250 is a topological domain (cytoplasmic).

The protein belongs to the archaeal/bacterial/fungal opsin family. In terms of assembly, homopentamer. GPR protomers assemble into a pentamer around a central pore with a C5 symmetry axis. Post-translationally, contains one covalently linked retinal chromophore per subunit.

The protein resides in the cell membrane. Its function is as follows. Light-driven proton pump. This Unknown prokaryotic organism protein is Green-light absorbing proteorhodopsin.